The following is a 387-amino-acid chain: 8-amino-7-oxononanoate synthase (387 aa).

Substrate is bound at residue arginine 19. Residue 106–107 coordinates pyridoxal 5'-phosphate; sequence GY. Residue histidine 131 participates in substrate binding. The pyridoxal 5'-phosphate site is built by serine 177, histidine 205, and threonine 236. Residue lysine 239 is modified to N6-(pyridoxal phosphate)lysine. Threonine 353 contacts substrate.

It belongs to the class-II pyridoxal-phosphate-dependent aminotransferase family. BioF subfamily. Homodimer. The cofactor is pyridoxal 5'-phosphate.

The catalysed reaction is 6-carboxyhexanoyl-[ACP] + L-alanine + H(+) = (8S)-8-amino-7-oxononanoate + holo-[ACP] + CO2. It participates in cofactor biosynthesis; biotin biosynthesis. Its function is as follows. Catalyzes the decarboxylative condensation of pimeloyl-[acyl-carrier protein] and L-alanine to produce 8-amino-7-oxononanoate (AON), [acyl-carrier protein], and carbon dioxide. In Nitrosomonas europaea (strain ATCC 19718 / CIP 103999 / KCTC 2705 / NBRC 14298), this protein is 8-amino-7-oxononanoate synthase.